The primary structure comprises 176 residues: NAD(P)H-quinone oxidoreductase subunit J (176 aa).

The disordered stretch occupies residues 1–32; sequence MEKEGLAKSSDTSIKKEGFISQSLSKDGIPNQ. Polar residues predominate over residues 20 to 32; that stretch reads ISQSLSKDGIPNQ.

It belongs to the complex I 30 kDa subunit family. NDH-1 can be composed of about 15 different subunits; different subcomplexes with different compositions have been identified which probably have different functions.

It is found in the cellular thylakoid membrane. The enzyme catalyses a plastoquinone + NADH + (n+1) H(+)(in) = a plastoquinol + NAD(+) + n H(+)(out). It carries out the reaction a plastoquinone + NADPH + (n+1) H(+)(in) = a plastoquinol + NADP(+) + n H(+)(out). In terms of biological role, NDH-1 shuttles electrons from an unknown electron donor, via FMN and iron-sulfur (Fe-S) centers, to quinones in the respiratory and/or the photosynthetic chain. The immediate electron acceptor for the enzyme in this species is believed to be plastoquinone. Couples the redox reaction to proton translocation, and thus conserves the redox energy in a proton gradient. Cyanobacterial NDH-1 also plays a role in inorganic carbon-concentration. The protein is NAD(P)H-quinone oxidoreductase subunit J of Prochlorococcus marinus (strain MIT 9215).